Reading from the N-terminus, the 249-residue chain is MDDGELEFSNSNMGGELPSCSMDSFFDELLRDSHACTHTHTCNPPGPENTHTHTCLHVHTKILPDKVSTDDTSESSGKKRPLGNREAVRKYREKKKAKAASLEDEVMRLKAVNNQLLKRLQGQAALEAEVTRLKCLLVDIRGRIDGEIGAFPYQKPAVTNVPYSYMMHPCNMQCDVDNLYCLQNGNNGEGASMNEQGLNGCEFDQLECLANQNLAGKEIPVCSNGIGTFTVNGSGVNKRKGEPRAAKAV.

The interval 66 to 90 (KVSTDDTSESSGKKRPLGNREAVRK) is disordered. A bZIP domain is found at 74–121 (ESSGKKRPLGNREAVRKYREKKKAKAASLEDEVMRLKAVNNQLLKRLQ). The basic motif stretch occupies residues 78–98 (KKRPLGNREAVRKYREKKKAK). Residues 102–116 (LEDEVMRLKAVNNQL) are leucine-zipper.

It is found in the nucleus. In terms of biological role, transcription factor involved in the response to zinc ion deficiency. Binds to the consensus sequence 5'-[AG]TGTCGACA[CT]-3' also called zinc deficiency response element (ZDRE). The ZDRE sequence is conserved in the plant kingdom and present in the promoters of genes that constitute the primary response to zinc deficiency, comprising additional ZIP metal transporter genes. Required for zinc accumulation in roots. Mediates the expression of the zinc transporter ZIP12 during growth in zinc-deficient conditions. ZIP12 transporter is involved in zinc uptake in roots. The polypeptide is Basic leucine zipper 23 (Arabidopsis thaliana (Mouse-ear cress)).